We begin with the raw amino-acid sequence, 144 residues long: Small ribosomal subunit protein eS19A (144 aa).

Belongs to the eukaryotic ribosomal protein eS19 family. As to quaternary structure, component of the small ribosomal subunit (SSU). Mature yeast ribosomes consist of a small (40S) and a large (60S) subunit. The 40S small subunit contains 1 molecule of ribosomal RNA (18S rRNA) and 33 different proteins (encoded by 57 genes). The large 60S subunit contains 3 rRNA molecules (25S, 5.8S and 5S rRNA) and 46 different proteins (encoded by 81 genes).

It is found in the cytoplasm. Component of the ribosome, a large ribonucleoprotein complex responsible for the synthesis of proteins in the cell. The small ribosomal subunit (SSU) binds messenger RNAs (mRNAs) and translates the encoded message by selecting cognate aminoacyl-transfer RNA (tRNA) molecules. The large subunit (LSU) contains the ribosomal catalytic site termed the peptidyl transferase center (PTC), which catalyzes the formation of peptide bonds, thereby polymerizing the amino acids delivered by tRNAs into a polypeptide chain. The nascent polypeptides leave the ribosome through a tunnel in the LSU and interact with protein factors that function in enzymatic processing, targeting, and the membrane insertion of nascent chains at the exit of the ribosomal tunnel. eS19 is required for proper maturation of the small (40S) ribosomal subunit. Binds to 40S pre-ribosomal particles, probably required after association of NOC4 but before association of ENP1, TSR1 and RIO2 with 20/21S pre-rRNA. This chain is Small ribosomal subunit protein eS19A, found in Saccharomyces cerevisiae (strain ATCC 204508 / S288c) (Baker's yeast).